Here is a 613-residue protein sequence, read N- to C-terminus: Threonine--tRNA ligase (613 aa).

The tract at residues 1–147 (MRLLLIHARS…TITPQESAPQ (147 aa)) is editing domain. Catalytic regions lie at residues 199–495 (PRYI…PALP) and 200–495 (RYID…PALP). Zn(2+) is bound by residues Cys-292, His-343, and His-464.

Belongs to the class-II aminoacyl-tRNA synthetase family. As to quaternary structure, homodimer. Zn(2+) serves as cofactor.

It localises to the cytoplasm. The enzyme catalyses tRNA(Thr) + L-threonine + ATP = L-threonyl-tRNA(Thr) + AMP + diphosphate + H(+). Catalyzes the attachment of threonine to tRNA(Thr) in a two-step reaction: L-threonine is first activated by ATP to form Thr-AMP and then transferred to the acceptor end of tRNA(Thr). Also edits incorrectly charged L-seryl-tRNA(Thr). The polypeptide is Threonine--tRNA ligase (Caldivirga maquilingensis (strain ATCC 700844 / DSM 13496 / JCM 10307 / IC-167)).